Reading from the N-terminus, the 190-residue chain is dITP/XTP pyrophosphatase (190 aa).

Substrate is bound at residue Thr-10 to Lys-15. Residues Glu-39 and Asp-68 each coordinate Mg(2+). Residue Asp-68 is the Proton acceptor of the active site. Residues Ala-69, Phe-143–Asp-146, Lys-166, and His-171–Arg-172 each bind substrate.

It belongs to the HAM1 NTPase family. As to quaternary structure, homodimer. The cofactor is Mg(2+).

It catalyses the reaction XTP + H2O = XMP + diphosphate + H(+). The enzyme catalyses dITP + H2O = dIMP + diphosphate + H(+). The catalysed reaction is ITP + H2O = IMP + diphosphate + H(+). In terms of biological role, pyrophosphatase that catalyzes the hydrolysis of nucleoside triphosphates to their monophosphate derivatives, with a high preference for the non-canonical purine nucleotides XTP (xanthosine triphosphate), dITP (deoxyinosine triphosphate) and ITP. Seems to function as a house-cleaning enzyme that removes non-canonical purine nucleotides from the nucleotide pool, thus preventing their incorporation into DNA/RNA and avoiding chromosomal lesions. This Hyperthermus butylicus (strain DSM 5456 / JCM 9403 / PLM1-5) protein is dITP/XTP pyrophosphatase.